We begin with the raw amino-acid sequence, 104 residues long: Large ribosomal subunit protein uL24 (104 aa).

This sequence belongs to the universal ribosomal protein uL24 family. In terms of assembly, part of the 50S ribosomal subunit.

One of two assembly initiator proteins, it binds directly to the 5'-end of the 23S rRNA, where it nucleates assembly of the 50S subunit. Its function is as follows. One of the proteins that surrounds the polypeptide exit tunnel on the outside of the subunit. The polypeptide is Large ribosomal subunit protein uL24 (Neorickettsia sennetsu (strain ATCC VR-367 / Miyayama) (Ehrlichia sennetsu)).